A 199-amino-acid polypeptide reads, in one-letter code: Imidazoleglycerol-phosphate dehydratase (199 aa).

Belongs to the imidazoleglycerol-phosphate dehydratase family.

The protein localises to the cytoplasm. It catalyses the reaction D-erythro-1-(imidazol-4-yl)glycerol 3-phosphate = 3-(imidazol-4-yl)-2-oxopropyl phosphate + H2O. The protein operates within amino-acid biosynthesis; L-histidine biosynthesis; L-histidine from 5-phospho-alpha-D-ribose 1-diphosphate: step 6/9. This is Imidazoleglycerol-phosphate dehydratase from Paramagnetospirillum magneticum (strain ATCC 700264 / AMB-1) (Magnetospirillum magneticum).